Reading from the N-terminus, the 438-residue chain is DEAD-box ATP-dependent RNA helicase CshB (438 aa).

A Q motif motif is present at residues 4-32 (TKFELYELKPFIIDAVHRLGFYEPTDIQK). A Helicase ATP-binding domain is found at 35 to 208 (IPAVLKKESV…KKYMENPKYA (174 aa)). 48–55 (SQTGTGKT) is a binding site for ATP. The short motif at 156–159 (DEAD) is the DEAD box element. The 151-residue stretch at 235–385 (LLFDIMSHLN…EWKKGDDRQR (151 aa)) folds into the Helicase C-terminal domain. The tract at residues 380-438 (GDDRQRRKKRKKTPNEADEIAHRLVKKPKKVKPGYKKKMSYEMEKIKKKQRRNQSKKRK) is disordered. Over residues 392–401 (TPNEADEIAH) the composition is skewed to basic and acidic residues. Basic residues-rich tracts occupy residues 402–417 (RLVK…YKKK) and 425–438 (IKKK…KKRK).

It belongs to the DEAD box helicase family. Interacts with CspB when cells are transcriptionally active. May interact with RNA helicases CshA and DbpA (DeaD), may be a component of a possible RNA degradosome complex composed of rny, rnja, rnjb, pnp, pfkA and eno (although rnjA and rnjB's presence is unclear). Specifically interacts with pnp and rny.

Its subcellular location is the cytoplasm. The protein resides in the nucleoid. The catalysed reaction is ATP + H2O = ADP + phosphate + H(+). In terms of biological role, DEAD-box RNA helicase that plays a role in 70S ribosome assembly. May work in conjunction with the cold shock proteins to ensure proper initiation of transcription at low and optimal temperatures. This is DEAD-box ATP-dependent RNA helicase CshB from Bacillus subtilis (strain 168).